The chain runs to 339 residues: Uridylate kinase PUMPKIN, chloroplastic (339 aa).

Residues 1–53 (MAIPLPLTSCSPISTSSSISRTSFVPLTLRNRTFFSNQNYSRRVLISCSSSLS) constitute a chloroplast transit peptide. Low complexity predominate over residues 52-79 (LSSDNGSSPDSMNGNGNGNGSSLNGQSS). The disordered stretch occupies residues 52–89 (LSSDNGSSPDSMNGNGNGNGSSLNGQSSFPRLPSFDGT). 102-105 (KVSG) provides a ligand contact to ATP. Positions 110-115 (GDEEQN) are involved in allosteric activation by GTP. Residue G144 coordinates UMP. ATP is bound by residues G145 and R149. D165 contributes to the UMP binding site. Residues 180–184 (QATME) and 189–191 (PTR) contribute to the ATP site. Position 226–233 (226–233 (TGNPFFTT)) interacts with UMP. ATP is bound by residues T253, F259, and D262.

It belongs to the UMP kinase family. In terms of assembly, homomultimer. Homohexamer. Forms RNA-containing megadalton-sized complexes. Expressed exclusively in leaves, but not in roots.

The protein resides in the plastid. It is found in the chloroplast stroma. It carries out the reaction UMP + ATP = UDP + ADP. Its pathway is pyrimidine metabolism; CTP biosynthesis via de novo pathway; UDP from UMP (UMPK route): step 1/1. In terms of biological role, catalyzes the reversible phosphorylation of UMP to UDP. Required for specific post-transcriptional processes of many plastid transcripts (e.g. PSI (PsaA, PsaF), PSII (D1, CP43, CP47), Cytochrome b(6)f (Cytb(6)), ATP synthase (AtpC), LHCs (LHCa3, LHCb2), and NDH (NdhH)), thus being essential for retaining photosynthetic activity in chloroplasts. Associates with group II introns of the plastid transcripts trnG-UCC, trnV-UAC, petB, petD and ndhA to stabilize corresponding precursor RNAs. This chain is Uridylate kinase PUMPKIN, chloroplastic, found in Arabidopsis thaliana (Mouse-ear cress).